A 202-amino-acid polypeptide reads, in one-letter code: MDTLTPKRRAIFEFIRERIAEHGQPPSLADIATRFGFASRSVARKHITALCQAGYIDVTPNQARGIRLAEPLRRPEILEIPVLGQVAAGAPIGPDLGIHEQLLLDPSLFRRTPDYLLKVRGDSMIDDGIFDGDLVGILQQADARDGQIVVARLDGEVTIKRLQRQGGTYRLLPRNPAYAPIDVQPEQDFFIEGVFCGLLRRD.

The segment at residues 28–48 (LADIATRFGFASRSVARKHIT) is a DNA-binding region (H-T-H motif). Catalysis depends on for autocatalytic cleavage activity residues S123 and K160.

The protein belongs to the peptidase S24 family. Homodimer.

It carries out the reaction Hydrolysis of Ala-|-Gly bond in repressor LexA.. Represses a number of genes involved in the response to DNA damage (SOS response), including recA and lexA. In the presence of single-stranded DNA, RecA interacts with LexA causing an autocatalytic cleavage which disrupts the DNA-binding part of LexA, leading to derepression of the SOS regulon and eventually DNA repair. The sequence is that of LexA repressor 2 from Pseudomonas putida (strain ATCC 47054 / DSM 6125 / CFBP 8728 / NCIMB 11950 / KT2440).